The sequence spans 170 residues: Photosystem I assembly protein Ycf3 (170 aa).

TPR repeat units follow at residues 35–68, 72–105, and 120–153; these read AFTY…EIDP, SYIL…NPFL, and GEQA…TPGN.

It belongs to the Ycf3 family.

It is found in the plastid. It localises to the chloroplast thylakoid membrane. Its function is as follows. Essential for the assembly of the photosystem I (PSI) complex. May act as a chaperone-like factor to guide the assembly of the PSI subunits. The chain is Photosystem I assembly protein Ycf3 from Oryza sativa (Rice).